We begin with the raw amino-acid sequence, 464 residues long: Fumarate hydratase class II (464 aa).

Residues 100 to 102, 131 to 134, 141 to 143, and threonine 189 each bind substrate; these read SGT, HPND, and SSN. Histidine 190 acts as the Proton donor/acceptor in catalysis. Serine 320 is a catalytic residue. Residues serine 321 and 326-328 each bind substrate; that span reads KVN.

It belongs to the class-II fumarase/aspartase family. Fumarase subfamily. As to quaternary structure, homotetramer.

Its subcellular location is the cytoplasm. It carries out the reaction (S)-malate = fumarate + H2O. It participates in carbohydrate metabolism; tricarboxylic acid cycle; (S)-malate from fumarate: step 1/1. Its function is as follows. Involved in the TCA cycle. Catalyzes the stereospecific interconversion of fumarate to L-malate. The sequence is that of Fumarate hydratase class II from Deinococcus radiodurans (strain ATCC 13939 / DSM 20539 / JCM 16871 / CCUG 27074 / LMG 4051 / NBRC 15346 / NCIMB 9279 / VKM B-1422 / R1).